Reading from the N-terminus, the 492-residue chain is uncharacterized protein (492 aa).

Helical transmembrane passes span 16–36, 39–59, 107–127, 133–153, 162–182, 210–230, 243–263, 291–311, 350–370, 394–414, 429–449, and 454–474; these read FIAFVFNYIAGFGFISVVMTM, VGPFSYLVLGLTSFAILGVVL, SFNGVVIPAVLIFSFADIPVV, IIIGLLVGGFLLFGLLTFISL, AIFYFAVIKWIVVIGGFILGI, IIFISLALTIAFAGTEDLASI, FLIAFGCVVLLYLVGFVIISG, LVGGVPLLVIYGLGLLVNSLA, VLISNLMTLLVMLIMVIIPFL, MAAAISLIQYFITFIFFFMIF, VSYVISFALVSVLLFVPLFPF, and VFNTFKIVVLICFYLLGVGFF.

The protein to M.genitalium MG225.

It is found in the cell membrane. This is an uncharacterized protein from Mycoplasma genitalium (strain ATCC 33530 / DSM 19775 / NCTC 10195 / G37) (Mycoplasmoides genitalium).